The primary structure comprises 185 residues: MAAEKDQQKDAEPEGLSATTLLPKLIPSGAGRERLERRRATIRPWSSFVDQRRFSRPRNLGELCQRLVRNVEYYQSNYVFVFLGLILYCVVTSPMLLVALAVFFGACYILYLRTLQSKFVLFGREVSPAHQYALAGGVSFPFFWLAGAGSAVFWVLGATLVVIGSHAAFHQMEAVDGEELQMEPV.

Topologically, residues 1–78 (MAAEKDQQKD…RNVEYYQSNY (78 aa)) are cytoplasmic. Positions 30–54 (AGRERLERRRATIRPWSSFVDQRRF) are required for interaction with prenylated RAB3A and VAMP2. Transmembrane regions (helical) follow at residues 79–94 (VFVF…VTSP) and 95–112 (MLLV…ILYL). Residues 113-131 (RTLQSKFVLFGREVSPAHQ) lie on the Cytoplasmic side of the membrane. The next 2 helical transmembrane spans lie at 132–148 (YALA…LAGA) and 149–165 (GSAV…VIGS). A required for interaction with GDI1 region spans residues 165–185 (SHAAFHQMEAVDGEELQMEPV). Residues 166-185 (HAAFHQMEAVDGEELQMEPV) lie on the Cytoplasmic side of the membrane. Residues 175 to 185 (VDGEELQMEPV) form a required for interaction with prenylated RAB3A and VAMP2 region. The tract at residues 175–185 (VDGEELQMEPV) is homodimerization.

It belongs to the PRA1 family. As to quaternary structure, homodimer. Interacts with VAMP2 (synaptobrevin-2), prenylated Rab proteins, GDI1, NDRG1 and PCLO.

It localises to the cell membrane. The protein resides in the cytoplasm. It is found in the golgi apparatus. The protein localises to the cytoplasmic vesicle. Its subcellular location is the secretory vesicle. It localises to the synaptic vesicle. Its function is as follows. General Rab protein regulator required for vesicle formation from the Golgi complex. May control vesicle docking and fusion by mediating the action of Rab GTPases to the SNARE complexes. In addition it inhibits the removal of Rab GTPases from the membrane by GDI1. The chain is Prenylated Rab acceptor protein 1 (RABAC1) from Canis lupus familiaris (Dog).